The following is a 394-amino-acid chain: Cytohesin-4 (394 aa).

The stretch at 12-65 forms a coiled coil; sequence SSGETEELQRIKWHRKQLLEDIQKLKDEIADVFAQIDCFESAEESRMAQKEKEL. The 188-residue stretch at 54–241 folds into the SEC7 domain; sequence EESRMAQKEK…RNLFDSIKSE (188 aa). Positions 259–375 constitute a PH domain; sequence NPDREGWLLK…WIESIRASIT (117 aa). Residues 268 to 275, arginine 279, tyrosine 290, and arginine 300 contribute to the a 1,2-diacyl-sn-glycero-3-phospho-(1D-myo-inositol-3,4,5-trisphosphate) site; that span reads KLGGRVKT. The interval 386 to 394 is C-terminal autoinhibitory region; the sequence is RKKKIASKQ.

In terms of tissue distribution, expressed predominantly in peripheral blood leukocytes.

It localises to the cell membrane. Its function is as follows. Promotes guanine-nucleotide exchange on ARF1 and ARF5. Promotes the activation of ARF factors through replacement of GDP with GTP. The protein is Cytohesin-4 (CYTH4) of Homo sapiens (Human).